Here is a 282-residue protein sequence, read N- to C-terminus: Elongation factor Ts (282 aa).

The segment at 79–82 is involved in Mg(2+) ion dislocation from EF-Tu; sequence TDFV.

Belongs to the EF-Ts family.

The protein localises to the cytoplasm. Functionally, associates with the EF-Tu.GDP complex and induces the exchange of GDP to GTP. It remains bound to the aminoacyl-tRNA.EF-Tu.GTP complex up to the GTP hydrolysis stage on the ribosome. This Shewanella piezotolerans (strain WP3 / JCM 13877) protein is Elongation factor Ts.